Reading from the N-terminus, the 838-residue chain is Urease (838 aa).

Residues 402 to 838 (GGFDTHIHFI…LPLTQDYFVY (437 aa)) enclose the Urease domain. H407, H409, and K490 together coordinate Ni(2+). An N6-carboxylysine modification is found at K490. H492 lines the substrate pocket. Residues H519 and H545 each contribute to the Ni(2+) site. The Proton donor role is filled by H593. D633 contributes to the Ni(2+) binding site.

This sequence in the C-terminal section; belongs to the metallo-dependent hydrolases superfamily. Urease alpha subunit family. In terms of assembly, homohexamer. Ni cation serves as cofactor. Carboxylation allows a single lysine to coordinate two nickel ions.

It catalyses the reaction urea + 2 H2O + H(+) = hydrogencarbonate + 2 NH4(+). The protein operates within nitrogen metabolism; urea degradation; CO(2) and NH(3) from urea (urease route): step 1/1. This Aspergillus fumigatus (strain ATCC MYA-4609 / CBS 101355 / FGSC A1100 / Af293) (Neosartorya fumigata) protein is Urease (ure1).